Consider the following 243-residue polypeptide: uncharacterized protein (243 aa).

This is an uncharacterized protein from Ureaplasma parvum serovar 3 (strain ATCC 700970).